We begin with the raw amino-acid sequence, 432 residues long: Serine/threonine-protein kinase Sgk1 (432 aa).

The tract at residues 67–93 is disordered; the sequence is PELMNANPSPPPSPSQQINLGPSSNPH. Polar residues predominate over residues 82–92; sequence QQINLGPSSNP. A Protein kinase domain is found at 99 to 356; it reads FHFLKVIGKG…FTEIKNHIFF (258 aa). ATP is bound by residues 105-113 and Lys-128; that span reads IGKGSFGKV. The Proton acceptor role is filled by Asp-223. An AGC-kinase C-terminal domain is found at 357 to 432; sequence SPINWDDLIN…SYAPPVDSFL (76 aa).

Belongs to the protein kinase superfamily. AGC Ser/Thr protein kinase family.

The protein localises to the cytoplasm. Its subcellular location is the nucleus. The protein resides in the endoplasmic reticulum. It carries out the reaction L-seryl-[protein] + ATP = O-phospho-L-seryl-[protein] + ADP + H(+). The enzyme catalyses L-threonyl-[protein] + ATP = O-phospho-L-threonyl-[protein] + ADP + H(+). Protein kinase that may play an important role in cellular stress response. May be involved in the regulation of processes such as cell survival, neuronal excitability and renal sodium excretion. The polypeptide is Serine/threonine-protein kinase Sgk1 (SGK1) (Gallus gallus (Chicken)).